The chain runs to 273 residues: 1,4-dihydroxy-2-naphthoyl-CoA synthase (273 aa).

Substrate is bound by residues Arg34, 73-77, Tyr85, 117-121, Thr143, Ser149, Tyr246, and Lys261; these read SGGDQ and YAVGG. 142-144 provides a ligand contact to hydrogencarbonate; sequence QTG. The span at 254-265 shows a compositional bias: basic and acidic residues; that stretch reads GRDAFKEKRDPD. Positions 254–273 are disordered; it reads GRDAFKEKRDPDFDQFPKFP.

It belongs to the enoyl-CoA hydratase/isomerase family. MenB subfamily. Hydrogencarbonate is required as a cofactor.

The enzyme catalyses 2-succinylbenzoyl-CoA + H(+) = 1,4-dihydroxy-2-naphthoyl-CoA + H2O. It functions in the pathway quinol/quinone metabolism; 1,4-dihydroxy-2-naphthoate biosynthesis; 1,4-dihydroxy-2-naphthoate from chorismate: step 6/7. Its pathway is quinol/quinone metabolism; menaquinone biosynthesis. In terms of biological role, converts o-succinylbenzoyl-CoA (OSB-CoA) to 1,4-dihydroxy-2-naphthoyl-CoA (DHNA-CoA). The protein is 1,4-dihydroxy-2-naphthoyl-CoA synthase of Staphylococcus aureus (strain MRSA252).